The sequence spans 250 residues: Ubiquinone/menaquinone biosynthesis C-methyltransferase UbiE (250 aa).

S-adenosyl-L-methionine is bound by residues S73, D94, and N122–A123.

It belongs to the class I-like SAM-binding methyltransferase superfamily. MenG/UbiE family.

It catalyses the reaction a 2-demethylmenaquinol + S-adenosyl-L-methionine = a menaquinol + S-adenosyl-L-homocysteine + H(+). The enzyme catalyses a 2-methoxy-6-(all-trans-polyprenyl)benzene-1,4-diol + S-adenosyl-L-methionine = a 5-methoxy-2-methyl-3-(all-trans-polyprenyl)benzene-1,4-diol + S-adenosyl-L-homocysteine + H(+). The protein operates within quinol/quinone metabolism; menaquinone biosynthesis; menaquinol from 1,4-dihydroxy-2-naphthoate: step 2/2. It participates in cofactor biosynthesis; ubiquinone biosynthesis. Its function is as follows. Methyltransferase required for the conversion of demethylmenaquinol (DMKH2) to menaquinol (MKH2) and the conversion of 2-polyprenyl-6-methoxy-1,4-benzoquinol (DDMQH2) to 2-polyprenyl-3-methyl-6-methoxy-1,4-benzoquinol (DMQH2). The chain is Ubiquinone/menaquinone biosynthesis C-methyltransferase UbiE from Legionella pneumophila (strain Corby).